The chain runs to 713 residues: Catalase-peroxidase (713 aa).

Residues 77–200 (WHSAGTYRTT…LGATVMGLIY (124 aa)) constitute a cross-link (tryptophyl-tyrosyl-methioninium (Trp-Tyr) (with M-226)). The active-site Proton acceptor is the histidine 78. A cross-link (tryptophyl-tyrosyl-methioninium (Tyr-Met) (with W-77)) is located at residues 200-226 (YVNPEGPDGEPDLEGSAANIRESFGRM). Histidine 241 lines the heme b pocket.

Belongs to the peroxidase family. Peroxidase/catalase subfamily. In terms of assembly, homodimer or homotetramer. It depends on heme b as a cofactor. In terms of processing, formation of the three residue Trp-Tyr-Met cross-link is important for the catalase, but not the peroxidase activity of the enzyme.

It catalyses the reaction H2O2 + AH2 = A + 2 H2O. The enzyme catalyses 2 H2O2 = O2 + 2 H2O. Bifunctional enzyme with both catalase and broad-spectrum peroxidase activity. The sequence is that of Catalase-peroxidase from Natronomonas pharaonis (strain ATCC 35678 / DSM 2160 / CIP 103997 / JCM 8858 / NBRC 14720 / NCIMB 2260 / Gabara) (Halobacterium pharaonis).